Here is a 311-residue protein sequence, read N- to C-terminus: Probable mitochondrial phosphate carrier protein (311 aa).

Over 1–23 (MSTPLIPPAPPKKTLQLYTPQYY) the chain is Mitochondrial intermembrane. Solcar repeat units lie at residues 21–105 (QYYG…FKHK), 118–203 (YRTS…IVEA), and 219–303 (EKIG…FKIM). Residues 24-44 (GLCTLGGLLACGTTHSAITPL) traverse the membrane as a helical segment. At 45–67 (DLIKCRKQVNPNIYPGNIAGFKT) the chain is on the mitochondrial matrix side. A helical membrane pass occupies residues 68–88 (ILSKEGLRGLYTGGMPTLIGY). Topologically, residues 89–120 (SLQGCGKYGFYELFKHKYSTLVGAQKAHEYRT) are mitochondrial intermembrane. A helical transmembrane segment spans residues 121–141 (SIYLAASASAELLADIMLCPM). Topologically, residues 142 to 171 (EAIKVRVQTSNPRFANTTREAWSKIVTNEG) are mitochondrial matrix. The chain crosses the membrane as a helical span at residues 172–192 (FGTLYRGLAPLWFRQIPYTMM). Over 193–220 (KFASFERIVEALYTYIGKPKNMYSKAEK) the chain is Mitochondrial intermembrane. Residues 221–241 (IGISFAGGYMAGVLCAIISHP) traverse the membrane as a helical segment. The Mitochondrial matrix portion of the chain corresponds to 242–269 (ADVMVSKLNSNKKAGEGAGAAAARIYKE). A helical transmembrane segment spans residues 270–290 (IGFSGLWNGLGVRIVMIGTLT). The Mitochondrial intermembrane segment spans residues 291–311 (GAQWLIYDSFKIMCGFPATGA).

The protein belongs to the mitochondrial carrier (TC 2.A.29) family.

The protein localises to the mitochondrion inner membrane. In terms of biological role, transport of phosphate groups from the cytosol to the mitochondrial matrix. The chain is Probable mitochondrial phosphate carrier protein from Schizosaccharomyces pombe (strain 972 / ATCC 24843) (Fission yeast).